Reading from the N-terminus, the 466-residue chain is MLVVGMSHRSAPVALLERLSMDDSVRGQTTSALVERPSLSEALIVSTCNRLEVYTVTSSFHTGVNDVVEVLHEISGVDIETLRGYLYVRYADAAAEHMLVVASGLDSMVVGEQQIIGQVRTAYQQATEAGTVGPALHALAQTALHTGKRVHTETDIDEAGASMVSFAIDRALTQMGIDPASDKPLAGKTALVLGAGAMSSLAATHLGREGVDKLIMANRTRERAERLASHSLEAGVPAEVVDFADRASVLDRVDMVVSATGADDFTVKPADIPAGVQLMLVDLSMPRDIDDACAEVPGVDLVNIERLHRAKREDPTGAAAEGADALAIVREELEAFTSEQRIRDVVPAVSALRKRANELLLDELDRLQARTPDISQEDWKEVTRTVRRVMDKFLHEPTVRVKKLAARSGSVSYESALQELFGLEAVQTTAPPAITSVNASDLPDAGIVAIVNSPSTTGQSVSVDGS.

Substrate contacts are provided by residues 47-50, Ser107, 112-114, and Gln118; these read TCNR and EQQ. The active-site Nucleophile is the Cys48. NADP(+) is bound at residue 194–199; that stretch reads GAGAMS.

This sequence belongs to the glutamyl-tRNA reductase family. Homodimer.

It catalyses the reaction (S)-4-amino-5-oxopentanoate + tRNA(Glu) + NADP(+) = L-glutamyl-tRNA(Glu) + NADPH + H(+). It functions in the pathway porphyrin-containing compound metabolism; protoporphyrin-IX biosynthesis; 5-aminolevulinate from L-glutamyl-tRNA(Glu): step 1/2. Functionally, catalyzes the NADPH-dependent reduction of glutamyl-tRNA(Glu) to glutamate 1-semialdehyde (GSA). The sequence is that of Glutamyl-tRNA reductase from Corynebacterium efficiens (strain DSM 44549 / YS-314 / AJ 12310 / JCM 11189 / NBRC 100395).